We begin with the raw amino-acid sequence, 492 residues long: ATP synthase subunit beta, chloroplastic (492 aa).

G170–T177 is an ATP binding site.

Belongs to the ATPase alpha/beta chains family. In terms of assembly, F-type ATPases have 2 components, CF(1) - the catalytic core - and CF(0) - the membrane proton channel. CF(1) has five subunits: alpha(3), beta(3), gamma(1), delta(1), epsilon(1). CF(0) has four main subunits: a(1), b(1), b'(1) and c(9-12).

Its subcellular location is the plastid. It is found in the chloroplast thylakoid membrane. It carries out the reaction ATP + H2O + 4 H(+)(in) = ADP + phosphate + 5 H(+)(out). Functionally, produces ATP from ADP in the presence of a proton gradient across the membrane. The catalytic sites are hosted primarily by the beta subunits. The chain is ATP synthase subunit beta, chloroplastic from Marchantia polymorpha (Common liverwort).